A 133-amino-acid chain; its full sequence is Ribosome-binding factor A (133 aa).

This sequence belongs to the RbfA family. As to quaternary structure, monomer. Binds 30S ribosomal subunits, but not 50S ribosomal subunits or 70S ribosomes.

It is found in the cytoplasm. Functionally, one of several proteins that assist in the late maturation steps of the functional core of the 30S ribosomal subunit. Associates with free 30S ribosomal subunits (but not with 30S subunits that are part of 70S ribosomes or polysomes). Required for efficient processing of 16S rRNA. May interact with the 5'-terminal helix region of 16S rRNA. The polypeptide is Ribosome-binding factor A (Acinetobacter baumannii (strain ACICU)).